The following is a 349-amino-acid chain: tRNA pseudouridine synthase D (349 aa).

Substrate is bound at residue Phe27. The active-site Nucleophile is the Asp80. Asn129 contacts substrate. The 149-residue stretch at 155–303 (GVPNYFGAQR…VEAARRAMLL (149 aa)) folds into the TRUD domain. A substrate-binding site is contributed by Phe329.

Belongs to the pseudouridine synthase TruD family.

It catalyses the reaction uridine(13) in tRNA = pseudouridine(13) in tRNA. Its function is as follows. Responsible for synthesis of pseudouridine from uracil-13 in transfer RNAs. The chain is tRNA pseudouridine synthase D from Escherichia coli (strain SMS-3-5 / SECEC).